Consider the following 347-residue polypeptide: 4-hydroxy-2-oxovalerate aldolase 4 (347 aa).

Residues 9–259 (ITIVDTTLRD…DTGVDLFPLI (251 aa)) enclose the Pyruvate carboxyltransferase domain. Residues 17-18 (RD), Ser-171, and His-198 contribute to the substrate site. A Mn(2+)-binding site is contributed by Asp-18. The Mn(2+) site is built by His-198 and His-200. Tyr-289 lines the substrate pocket.

The protein belongs to the 4-hydroxy-2-oxovalerate aldolase family.

It carries out the reaction (S)-4-hydroxy-2-oxopentanoate = acetaldehyde + pyruvate. This Rhodococcus opacus (strain B4) protein is 4-hydroxy-2-oxovalerate aldolase 4.